We begin with the raw amino-acid sequence, 410 residues long: Arginine deiminase (410 aa).

Cys400 functions as the Amidino-cysteine intermediate in the catalytic mechanism.

The protein belongs to the arginine deiminase family.

Its subcellular location is the cytoplasm. The enzyme catalyses L-arginine + H2O = L-citrulline + NH4(+). It functions in the pathway amino-acid degradation; L-arginine degradation via ADI pathway; carbamoyl phosphate from L-arginine: step 1/2. The polypeptide is Arginine deiminase (arcA) (Borreliella burgdorferi (strain ATCC 35210 / DSM 4680 / CIP 102532 / B31) (Borrelia burgdorferi)).